The chain runs to 158 residues: Urease accessory protein UreE (158 aa).

The protein belongs to the UreE family.

It is found in the cytoplasm. Its function is as follows. Involved in urease metallocenter assembly. Binds nickel. Probably functions as a nickel donor during metallocenter assembly. This is Urease accessory protein UreE from Klebsiella pneumoniae subsp. pneumoniae (strain ATCC 700721 / MGH 78578).